The sequence spans 98 residues: NADH-ubiquinone oxidoreductase chain 4L (98 aa).

The next 3 helical transmembrane spans lie at 1–21 (MTMV…GLLM), 29–49 (SLLC…VTIL), and 61–81 (IVLL…LVMV).

This sequence belongs to the complex I subunit 4L family. In terms of assembly, core subunit of respiratory chain NADH dehydrogenase (Complex I) which is composed of 45 different subunits.

The protein localises to the mitochondrion inner membrane. It catalyses the reaction a ubiquinone + NADH + 5 H(+)(in) = a ubiquinol + NAD(+) + 4 H(+)(out). Functionally, core subunit of the mitochondrial membrane respiratory chain NADH dehydrogenase (Complex I) which catalyzes electron transfer from NADH through the respiratory chain, using ubiquinone as an electron acceptor. Part of the enzyme membrane arm which is embedded in the lipid bilayer and involved in proton translocation. This Monachus monachus (Mediterranean monk seal) protein is NADH-ubiquinone oxidoreductase chain 4L (MT-ND4L).